Here is a 254-residue protein sequence, read N- to C-terminus: L-rhamnose 1-dehydrogenase (NADP(+)) (254 aa).

NADP(+)-binding residues include Gly-13, Ser-15, Arg-16, Ile-18, Asp-64, and Asn-91. Catalysis depends on Ser-144, which acts as the Proton donor. Residues Ser-144, Ser-146, Gln-154, and Tyr-157 each coordinate beta-L-rhamnose. NADP(+)-binding residues include Tyr-157 and Lys-161. Tyr-157 acts as the Proton acceptor in catalysis. The active-site Lowers pKa of active site Tyr is Lys-161. Residue Thr-189 coordinates beta-L-rhamnose. Residue Ile-190 participates in NADP(+) binding. Position 195 (Asn-195) interacts with beta-L-rhamnose.

The protein belongs to the short-chain dehydrogenases/reductases (SDR) family.

The catalysed reaction is L-rhamnofuranose + NADP(+) = L-rhamnono-1,4-lactone + NADPH + H(+). It functions in the pathway carbohydrate degradation; L-rhamnose degradation. Its function is as follows. Involved in the non-phosphorylated metabolic pathway of L-rhamnose catabolism. Catalyzes the oxidation of L-rhamnose to yield L-rhamnono-1,4-lactone. It can also oxidize L-lyxose and L-mannose, and uses only NADP. This chain is L-rhamnose 1-dehydrogenase (NADP(+)), found in Thermoplasma acidophilum (strain ATCC 25905 / DSM 1728 / JCM 9062 / NBRC 15155 / AMRC-C165).